The chain runs to 481 residues: Methylenetetrahydrofolate--tRNA-(uracil-5-)-methyltransferase TrmFO (481 aa).

13–18 (GGGLAG) provides a ligand contact to FAD.

The protein belongs to the MnmG family. TrmFO subfamily. Requires FAD as cofactor.

Its subcellular location is the cytoplasm. The enzyme catalyses uridine(54) in tRNA + (6R)-5,10-methylene-5,6,7,8-tetrahydrofolate + NADH + H(+) = 5-methyluridine(54) in tRNA + (6S)-5,6,7,8-tetrahydrofolate + NAD(+). It carries out the reaction uridine(54) in tRNA + (6R)-5,10-methylene-5,6,7,8-tetrahydrofolate + NADPH + H(+) = 5-methyluridine(54) in tRNA + (6S)-5,6,7,8-tetrahydrofolate + NADP(+). In terms of biological role, catalyzes the folate-dependent formation of 5-methyl-uridine at position 54 (M-5-U54) in all tRNAs. In Agrobacterium fabrum (strain C58 / ATCC 33970) (Agrobacterium tumefaciens (strain C58)), this protein is Methylenetetrahydrofolate--tRNA-(uracil-5-)-methyltransferase TrmFO.